Here is a 366-residue protein sequence, read N- to C-terminus: Ribosomal RNA large subunit methyltransferase M (366 aa).

S-adenosyl-L-methionine-binding positions include Ser-188, 221–224, Asp-240, Asp-260, and Asp-277; that span reads CPGG. Residue Lys-306 is the Proton acceptor of the active site.

This sequence belongs to the class I-like SAM-binding methyltransferase superfamily. RNA methyltransferase RlmE family. RlmM subfamily. In terms of assembly, monomer.

It localises to the cytoplasm. It carries out the reaction cytidine(2498) in 23S rRNA + S-adenosyl-L-methionine = 2'-O-methylcytidine(2498) in 23S rRNA + S-adenosyl-L-homocysteine + H(+). Catalyzes the 2'-O-methylation at nucleotide C2498 in 23S rRNA. In Escherichia fergusonii (strain ATCC 35469 / DSM 13698 / CCUG 18766 / IAM 14443 / JCM 21226 / LMG 7866 / NBRC 102419 / NCTC 12128 / CDC 0568-73), this protein is Ribosomal RNA large subunit methyltransferase M.